Here is a 149-residue protein sequence, read N- to C-terminus: Large ribosomal subunit protein bL9 (149 aa).

It belongs to the bacterial ribosomal protein bL9 family. In terms of assembly, part of the 50S ribosomal subunit. In stalled/collided disomes (pairs of ribosomes where the leading ribosome is stalled and a second ribosome has collided with it), bL9 in the collided ribosome contacts bS6 and uL2, while it contacts only helices of the 16S rRNA in the stalled ribosome; the inter-ribosome bridge thus formed is different from that formed between normally translating ribosomes.

Its function is as follows. Binds to the 23S rRNA. The protein is Large ribosomal subunit protein bL9 of Bacillus subtilis (strain 168).